The sequence spans 128 residues: UPF0325 protein YaeH (128 aa).

The protein belongs to the UPF0325 family.

The chain is UPF0325 protein YaeH from Shigella boydii serotype 18 (strain CDC 3083-94 / BS512).